Here is a 520-residue protein sequence, read N- to C-terminus: Diacylglycerol O-acyltransferase 1 (520 aa).

Disordered stretches follow at residues Arg-28–Ala-57 and Gln-72–Arg-116. Residues Asp-34–Gly-54 are compositionally biased toward low complexity. Over residues Asn-81–Arg-98 the composition is skewed to gly residues. 7 helical membrane-spanning segments follow: residues Ala-126–Val-146, Trp-176–Glu-196, Pro-207–Val-227, Ser-233–Val-253, Val-276–Tyr-296, Lys-317–Val-337, and Val-365–Leu-385. The FYXDWWN motif signature appears at Phe-392–Asn-398. 3 consecutive transmembrane segments (helical) span residues Leu-434–Pro-454, Leu-457–Asn-477, and Val-487–Leu-507. Residue His-447 is part of the active site.

It belongs to the membrane-bound acyltransferase family. Sterol o-acyltransferase subfamily. As to quaternary structure, interacts with LPCAT2 and LPAT2. Ubiquitous. Highest expression in young developing seeds.

Its subcellular location is the plastid. It is found in the chloroplast membrane. The protein resides in the endoplasmic reticulum membrane. It catalyses the reaction an acyl-CoA + a 1,2-diacyl-sn-glycerol = a triacyl-sn-glycerol + CoA. It carries out the reaction 1,2-di-(9Z-octadecenoyl)-sn-glycerol + (9Z)-octadecenoyl-CoA = 1,2,3-tri-(9Z-octadecenoyl)-glycerol + CoA. It functions in the pathway glycerolipid metabolism; triacylglycerol biosynthesis. Its activity is regulated as follows. Partially inhibited by niacin. Functionally, major contributor to triacylglycerol (TAG) synthesis and oil accumulation in seeds. Catalyzes the acylation of the sn-3 hydroxy group of sn-1,2-diacylglycerol using acyl-CoA. Can use palmitoyl-CoA and oleoyl-CoA as substrates. Can use oleoyl-CoA and linoleoyl-CoA as substrates. Has substrate preference for oleoyl-CoA compared to linoleoyl-CoA. Has complementary functions with PDAT1 that are essential for triacylglycerol synthesis and normal development of both seeds and pollen. The polypeptide is Diacylglycerol O-acyltransferase 1 (Arabidopsis thaliana (Mouse-ear cress)).